The primary structure comprises 380 residues: tRNA-specific 2-thiouridylase MnmA (380 aa).

ATP contacts are provided by residues 6-13 (ALSGGVDS) and M32. The Nucleophile role is filled by C101. Residues C101 and C199 are joined by a disulfide bond. Residue G125 participates in ATP binding. The interaction with tRNA stretch occupies residues 148-150 (KDQ). Residue C199 is the Cysteine persulfide intermediate of the active site.

The protein belongs to the MnmA/TRMU family.

Its subcellular location is the cytoplasm. It carries out the reaction S-sulfanyl-L-cysteinyl-[protein] + uridine(34) in tRNA + AH2 + ATP = 2-thiouridine(34) in tRNA + L-cysteinyl-[protein] + A + AMP + diphosphate + H(+). Functionally, catalyzes the 2-thiolation of uridine at the wobble position (U34) of tRNA, leading to the formation of s(2)U34. The polypeptide is tRNA-specific 2-thiouridylase MnmA (Beutenbergia cavernae (strain ATCC BAA-8 / DSM 12333 / CCUG 43141 / JCM 11478 / NBRC 16432 / NCIMB 13614 / HKI 0122)).